Reading from the N-terminus, the 552-residue chain is Urocanate hydratase (552 aa).

NAD(+) is bound by residues 49-50 (GG), glutamine 127, 173-175 (GMG), aspartate 193, 239-240 (NA), 260-264 (QTSAH), 270-271 (YI), and tyrosine 319. The active site involves cysteine 407. Glycine 489 is a binding site for NAD(+).

It belongs to the urocanase family. NAD(+) serves as cofactor.

The protein localises to the cytoplasm. The enzyme catalyses 4-imidazolone-5-propanoate = trans-urocanate + H2O. It participates in amino-acid degradation; L-histidine degradation into L-glutamate; N-formimidoyl-L-glutamate from L-histidine: step 2/3. Catalyzes the conversion of urocanate to 4-imidazolone-5-propionate. The chain is Urocanate hydratase from Bacillus cereus (strain ATCC 10987 / NRS 248).